Here is a 483-residue protein sequence, read N- to C-terminus: PAT complex subunit CCDC47 (483 aa).

A signal peptide spans 1 to 20 (MKGFHAFCVILLIFGSVSEA). Topologically, residues 21-135 (KFDDFEDEED…PAHLQNSWES (115 aa)) are cytoplasmic. The disordered stretch occupies residues 44–118 (DVAEDSVTES…PDTSSSKSKD (75 aa)). Acidic residues predominate over residues 60–104 (TEDDEDETTVELEGQDESQEGDFEDADTQEGDTESEPYDDEEFEG). Over residues 105–118 (YEDKPDTSSSKSKD) the composition is skewed to basic and acidic residues. A helical membrane pass occupies residues 136-156 (YYLEILMVTGLLAYIMNYIIG). At 157–483 (KNKNSRLAQA…KMKQIKVKAM (327 aa)) the chain is on the lumenal side. N178 is a glycosylation site (N-linked (GlcNAc...) asparagine). Residues 424 to 483 (QRQEAAQSRREEKKRAEKERIMNEEDPEKQRRLEEAALRREQKKLEKKQMKMKQIKVKAM) are disordered. Basic and acidic residues predominate over residues 430–472 (QSRREEKKRAEKERIMNEEDPEKQRRLEEAALRREQKKLEKKQ). The stretch at 450-483 (PEKQRRLEEAALRREQKKLEKKQMKMKQIKVKAM) forms a coiled coil. Residues 473–483 (MKMKQIKVKAM) are compositionally biased toward basic residues.

Belongs to the CCDC47 family. In terms of assembly, component of the PAT complex, composed of WDR83OS/Asterix and CCDC47. The PAT complex is part of the multi-pass translocon (MPT) complex, composed of three subcomplexes, the GEL complex (composed of RAB5IF/OPTI and TMCO1), the BOS complex (composed of NCLN/Nicalin, NOMO1 and TMEM147) and the PAT complex (composed of WDR83OS/Asterix and CCDC47). The MPT complex associates with the SEC61 complex. Interacts with VCP, HSPA5, DERL1, DERL2 and SELENOS.

The protein localises to the endoplasmic reticulum membrane. It is found in the rough endoplasmic reticulum membrane. Component of the multi-pass translocon (MPT) complex that mediates insertion of multi-pass membrane proteins into the lipid bilayer of membranes. The MPT complex takes over after the SEC61 complex: following membrane insertion of the first few transmembrane segments of proteins by the SEC61 complex, the MPT complex occludes the lateral gate of the SEC61 complex to promote insertion of subsequent transmembrane regions. Within the MPT complex, the PAT subcomplex sequesters any highly polar regions in the transmembrane domains away from the non-polar membrane environment until they can be buried in the interior of the fully assembled protein. Within the PAT subcomplex, CCDC47 occludes the lateral gate of the SEC61 complex. Involved in the regulation of calcium ion homeostasis in the ER. Required for proper protein degradation via the ERAD (ER-associated degradation) pathway. Has an essential role in the maintenance of ER organization during embryogenesis. This is PAT complex subunit CCDC47 (CCDC47) from Bos taurus (Bovine).